Consider the following 103-residue polypeptide: Co-chaperonin GroES (103 aa).

Belongs to the GroES chaperonin family. In terms of assembly, heptamer of 7 subunits arranged in a ring. Interacts with the chaperonin GroEL.

The protein resides in the cytoplasm. Together with the chaperonin GroEL, plays an essential role in assisting protein folding. The GroEL-GroES system forms a nano-cage that allows encapsulation of the non-native substrate proteins and provides a physical environment optimized to promote and accelerate protein folding. GroES binds to the apical surface of the GroEL ring, thereby capping the opening of the GroEL channel. The sequence is that of Co-chaperonin GroES from Picosynechococcus sp. (strain ATCC 27264 / PCC 7002 / PR-6) (Agmenellum quadruplicatum).